The sequence spans 85 residues: Alpha-insect toxin BjaIT (85 aa).

Residues 1–19 (MNYLVVICFALLLMTGVES) form the signal peptide. One can recognise an LCN-type CS-alpha/beta domain in the interval 21–83 (RDAYIADNLN…VPIRIPGACR (63 aa)). 4 disulfide bridges follow: C31–C82, C35–C55, C41–C65, and C45–C67. An Arginine amide modification is found at R83.

It belongs to the long (4 C-C) scorpion toxin superfamily. Sodium channel inhibitor family. Alpha subfamily. Expressed by the venom gland.

The protein localises to the secreted. Functionally, alpha toxins bind voltage-independently at site-3 of sodium channels (Nav) and inhibit the inactivation of the activated channels, thereby blocking neuronal transmission. This toxin is active against insects (para/tipE). This is Alpha-insect toxin BjaIT from Hottentotta judaicus (Black scorpion).